Consider the following 72-residue polypeptide: MAKEEVLEFPGVVTELLPNAMFRVKLENEHEIIAHTAGRMRKNRIRVLAGDKVLVEMTPYDLTKGRITYRLK.

The S1-like domain maps to 1-72; it reads MAKEEVLEFP…TKGRITYRLK (72 aa).

This sequence belongs to the IF-1 family. As to quaternary structure, component of the 30S ribosomal translation pre-initiation complex which assembles on the 30S ribosome in the order IF-2 and IF-3, IF-1 and N-formylmethionyl-tRNA(fMet); mRNA recruitment can occur at any time during PIC assembly.

The protein resides in the cytoplasm. Functionally, one of the essential components for the initiation of protein synthesis. Stabilizes the binding of IF-2 and IF-3 on the 30S subunit to which N-formylmethionyl-tRNA(fMet) subsequently binds. Helps modulate mRNA selection, yielding the 30S pre-initiation complex (PIC). Upon addition of the 50S ribosomal subunit IF-1, IF-2 and IF-3 are released leaving the mature 70S translation initiation complex. The sequence is that of Translation initiation factor IF-1 from Brucella suis biovar 1 (strain 1330).